We begin with the raw amino-acid sequence, 100 residues long: NADH-quinone oxidoreductase subunit K (100 aa).

3 consecutive transmembrane segments (helical) span residues 4–24, 29–49, and 60–80; these read YEYYVVLSGLLMVLGLIGIII, IAMLLSTELMLNAVNIAFVAF, and VFVFFILTIAAAEAAVGLGLI.

Belongs to the complex I subunit 4L family. NDH-1 is composed of 14 different subunits. Subunits NuoA, H, J, K, L, M, N constitute the membrane sector of the complex.

It localises to the cell inner membrane. The enzyme catalyses a quinone + NADH + 5 H(+)(in) = a quinol + NAD(+) + 4 H(+)(out). NDH-1 shuttles electrons from NADH, via FMN and iron-sulfur (Fe-S) centers, to quinones in the respiratory chain. The immediate electron acceptor for the enzyme in this species is believed to be ubiquinone. Couples the redox reaction to proton translocation (for every two electrons transferred, four hydrogen ions are translocated across the cytoplasmic membrane), and thus conserves the redox energy in a proton gradient. The protein is NADH-quinone oxidoreductase subunit K of Persephonella marina (strain DSM 14350 / EX-H1).